The sequence spans 260 residues: Voltage-dependent calcium channel gamma-6 subunit (260 aa).

The interval Arg-14–Pro-33 is disordered. A compositionally biased stretch (basic residues) spans Arg-15–Gly-25. 4 consecutive transmembrane segments (helical) span residues Leu-43–Val-63, Val-143–Leu-163, Phe-169–Leu-189, and Leu-221–Leu-241.

Belongs to the PMP-22/EMP/MP20 family. CACNG subfamily. As to quaternary structure, interacts with CACNA1C. Identified in a complex with the L-type calcium channel subunits CACNA1C, CACNA2D1 and either CACNB1 or CACNB2. As to expression, detected in heart left ventricle.

It localises to the cell membrane. Its function is as follows. Regulates the activity of L-type calcium channels that contain CACNA1C as pore-forming subunit. This is Voltage-dependent calcium channel gamma-6 subunit (CACNG6) from Homo sapiens (Human).